The sequence spans 224 residues: Ribosomal RNA small subunit methyltransferase G (224 aa).

Residues Gly-69, Leu-74, 119-120, and Arg-137 each bind S-adenosyl-L-methionine; that span reads AE.

Belongs to the methyltransferase superfamily. RNA methyltransferase RsmG family.

Its subcellular location is the cytoplasm. Functionally, specifically methylates the N7 position of guanine in position 518 of 16S rRNA. The chain is Ribosomal RNA small subunit methyltransferase G from Mycobacterium bovis (strain ATCC BAA-935 / AF2122/97).